The chain runs to 420 residues: Shaggy-related protein kinase delta (420 aa).

A disordered region spans residues 1 to 61 (MESHLGNGVG…DIIDGVGAEP (61 aa)). Residues 10–26 (GSSRSAKNTKNTSSSVD) show a composition bias toward polar residues. Basic and acidic residues predominate over residues 28-41 (LSRDMLEMKIRDKT). Residues 42–53 (EADEERDSEPDI) are compositionally biased toward acidic residues. A Protein kinase domain is found at 82–366 (YIAEHVVGTG…AVEACIHPFF (285 aa)). ATP-binding positions include 88-96 (VGTGSFGMV) and K111. D207 acts as the Proton acceptor in catalysis. Y242 carries the post-translational modification Phosphotyrosine.

This sequence belongs to the protein kinase superfamily. CMGC Ser/Thr protein kinase family. GSK-3 subfamily. Autophosphorylated mainly on threonine and serine residues.

It carries out the reaction L-seryl-[protein] + ATP = O-phospho-L-seryl-[protein] + ADP + H(+). The enzyme catalyses L-threonyl-[protein] + ATP = O-phospho-L-threonyl-[protein] + ADP + H(+). May mediate extracellular signals to regulate transcription in differentiating cells. The polypeptide is Shaggy-related protein kinase delta (ASK4) (Arabidopsis thaliana (Mouse-ear cress)).